The chain runs to 348 residues: Tetraacyldisaccharide 4'-kinase (348 aa).

65 to 72 (VAGGAGKT) is a binding site for ATP. The tract at residues 89-117 (PGIVSRGHGSREREARPVSADSTAQSVGD) is disordered.

Belongs to the LpxK family.

The catalysed reaction is a lipid A disaccharide + ATP = a lipid IVA + ADP + H(+). It participates in glycolipid biosynthesis; lipid IV(A) biosynthesis; lipid IV(A) from (3R)-3-hydroxytetradecanoyl-[acyl-carrier-protein] and UDP-N-acetyl-alpha-D-glucosamine: step 6/6. Transfers the gamma-phosphate of ATP to the 4'-position of a tetraacyldisaccharide 1-phosphate intermediate (termed DS-1-P) to form tetraacyldisaccharide 1,4'-bis-phosphate (lipid IVA). This Leptothrix cholodnii (strain ATCC 51168 / LMG 8142 / SP-6) (Leptothrix discophora (strain SP-6)) protein is Tetraacyldisaccharide 4'-kinase.